The sequence spans 452 residues: Probable glycine dehydrogenase (decarboxylating) subunit 1 (452 aa).

Belongs to the GcvP family. N-terminal subunit subfamily. The glycine cleavage system is composed of four proteins: P, T, L and H. In this organism, the P 'protein' is a heterodimer of two subunits.

It carries out the reaction N(6)-[(R)-lipoyl]-L-lysyl-[glycine-cleavage complex H protein] + glycine + H(+) = N(6)-[(R)-S(8)-aminomethyldihydrolipoyl]-L-lysyl-[glycine-cleavage complex H protein] + CO2. Functionally, the glycine cleavage system catalyzes the degradation of glycine. The P protein binds the alpha-amino group of glycine through its pyridoxal phosphate cofactor; CO(2) is released and the remaining methylamine moiety is then transferred to the lipoamide cofactor of the H protein. The protein is Probable glycine dehydrogenase (decarboxylating) subunit 1 of Alcanivorax borkumensis (strain ATCC 700651 / DSM 11573 / NCIMB 13689 / SK2).